An 87-amino-acid chain; its full sequence is DNA-directed RNA polymerase subunit omega (87 aa).

This sequence belongs to the RNA polymerase subunit omega family. In terms of assembly, the RNAP catalytic core consists of 2 alpha, 1 beta, 1 beta' and 1 omega subunit. When a sigma factor is associated with the core the holoenzyme is formed, which can initiate transcription.

It carries out the reaction RNA(n) + a ribonucleoside 5'-triphosphate = RNA(n+1) + diphosphate. In terms of biological role, promotes RNA polymerase assembly. Latches the N- and C-terminal regions of the beta' subunit thereby facilitating its interaction with the beta and alpha subunits. This Pseudomonas putida (strain W619) protein is DNA-directed RNA polymerase subunit omega.